Consider the following 894-residue polypeptide: Low-affinity phosphate transporter PHO91 (894 aa).

One can recognise an SPX domain in the interval 1-256 (MKFSHSLQFN…NTNLKQNYLN (256 aa)). Disordered regions lie at residues 124-160 (QHQL…LTDM) and 293-321 (RPSN…EDGN). Over residues 132–144 (RNRKSKSQQRQRR) the composition is skewed to basic residues. Positions 151–160 (TDSNPSLTDM) are enriched in polar residues. Residues Ser-295, Ser-311, and Ser-312 each carry the phosphoserine modification. 13 consecutive transmembrane segments (helical) span residues 430-450 (LKFL…LTPF), 474-494 (TIPL…FPVI), 511-531 (FILS…FTLA), 557-577 (FILL…SNVA), 602-622 (ALIL…PIAS), 642-662 (FMIA…LLII), 682-702 (FTLK…LWCL), 706-726 (ISGI…VFFG), 738-758 (FMWT…AVSS), 777-797 (PIFI…TFVS), 799-819 (TVAA…LPSG), 824-844 (LLIV…TSGF), and 874-894 (SLLS…VMGF).

This sequence belongs to the CitM (TC 2.A.11) transporter family. Ubiquitinated by RSP5. RSP5-mediated ubiquitination initiates internalization and degradation by the endocytic pathway.

Its subcellular location is the vacuole membrane. Its function is as follows. Vacuolar phosphate transporter that probably exports phosphate from the vacuolar lumen to the cytosol. In Saccharomyces cerevisiae (strain ATCC 204508 / S288c) (Baker's yeast), this protein is Low-affinity phosphate transporter PHO91 (PHO91).